Here is a 737-residue protein sequence, read N- to C-terminus: Oligopeptide transporter 3 (737 aa).

The next 16 membrane-spanning stretches (helical) occupy residues 45–65, 69–89, 117–137, 153–173, 215–235, 255–275, 289–309, 357–377, 418–438, 446–466, 478–498, 532–552, 604–624, 629–649, 650–670, and 681–701; these read AWFLGLTSCVLLIFLNTFFTY, PLTISAILMQIAVLPIGKFMA, VIITIFANCGVAYGGGDAYSI, FICGLFIVLTTQILGYGWAGI, FLVALGASFIYYALPGYLFPI, VGSGYHGLGVGAFTLDWAGIS, ILNVGVGFIMFIYIIVPVCYW, LYLSPLFALSIGSGFARFTAT, WWFYILLAGSVAMSLLMSFVW, WWGMLFAFALAFIVTLPIGVI, IIGQFIIGYILPGKPIANLIF, AQLVGTVVAGVVNLGVAWWML, VWLFLIGAVLPVPVWALSKIF, WIPLINIPVISYGFAGMPPAT, PTNIASWLVTGTIFNYFVFNY, and VLSAALDAGTAFMGVLLFFAL.

This sequence belongs to the oligopeptide OPT transporter (TC 2.A.67.1) family. As to expression, strong expression in flowers, leaves and roots. Preferentially expressed in the vascular tissues of seedlings and mature plants as well as in pollen and developing embryos.

The protein localises to the membrane. May be involved in the translocation of tetra- and pentapeptides across the cellular membrane in an energy-dependent manner. Also acts as a metal transporter that could be a component of the copper transport machinery. Essential for early embryo development. The polypeptide is Oligopeptide transporter 3 (OPT3) (Arabidopsis thaliana (Mouse-ear cress)).